A 27-amino-acid polypeptide reads, in one-letter code: Conotoxin flf14a (27 aa).

2 cysteine pairs are disulfide-bonded: Cys-6-Cys-26 and Cys-10-Cys-22.

Expressed by the venom duct.

Its subcellular location is the secreted. The sequence is that of Conotoxin flf14a from Conus anabathrum floridanus (Florida cone).